Reading from the N-terminus, the 263-residue chain is Tryptophan synthase alpha chain (263 aa).

Residues E49 and D60 each act as proton acceptor in the active site.

Belongs to the TrpA family. Tetramer of two alpha and two beta chains.

The catalysed reaction is (1S,2R)-1-C-(indol-3-yl)glycerol 3-phosphate + L-serine = D-glyceraldehyde 3-phosphate + L-tryptophan + H2O. It participates in amino-acid biosynthesis; L-tryptophan biosynthesis; L-tryptophan from chorismate: step 5/5. Functionally, the alpha subunit is responsible for the aldol cleavage of indoleglycerol phosphate to indole and glyceraldehyde 3-phosphate. In Roseobacter denitrificans (strain ATCC 33942 / OCh 114) (Erythrobacter sp. (strain OCh 114)), this protein is Tryptophan synthase alpha chain.